A 456-amino-acid chain; its full sequence is Putative F-box/LRR-repeat protein At5g02700 (456 aa).

An F-box domain is found at 26 to 72 (ADFINYMPDDILHHILSFIPTDLAMRTSVLSRRWRHVWCETPCLDIT). LRR repeat units lie at residues 126-154 (VRDFTYSKTYRFPDIFYLSSSLKLLDVTL), 177-202 (FCQIPDESIHNILSGCPILESLTLDT), 206-224 (LERLDLSKSPNLRRLDINQ), 271-300 (LSPLTADGYQTMALEMLSKFHNVKRLTVGE), and 330-355 (FVRSVIPGISRLLQNSPGLKKLRPST).

This chain is Putative F-box/LRR-repeat protein At5g02700, found in Arabidopsis thaliana (Mouse-ear cress).